The following is a 274-amino-acid chain: Energy-coupling factor transporter ATP-binding protein EcfA1 (274 aa).

Residues 11–245 (IELKNVKFKY…ERVIEIAKID (235 aa)) form the ABC transporter domain. 45-52 (GHNGSGKS) is an ATP binding site.

It belongs to the ABC transporter superfamily. Energy-coupling factor EcfA family. As to quaternary structure, forms a stable energy-coupling factor (ECF) transporter complex composed of 2 membrane-embedded substrate-binding proteins (S component), 2 ATP-binding proteins (A component) and 2 transmembrane proteins (T component).

The protein resides in the cell membrane. In terms of biological role, ATP-binding (A) component of a common energy-coupling factor (ECF) ABC-transporter complex. Unlike classic ABC transporters this ECF transporter provides the energy necessary to transport a number of different substrates. The sequence is that of Energy-coupling factor transporter ATP-binding protein EcfA1 from Mycoplasma mobile (strain ATCC 43663 / 163K / NCTC 11711) (Mesomycoplasma mobile).